The chain runs to 321 residues: Protein APA1 (321 aa).

A disordered region spans residues 50-70 (SLIEKPERGQTPEGEDPLGKP). Lys-54 contributes to the substrate binding site. Thr-60 carries the post-translational modification Phosphothreonine. Substrate is bound by residues 93-94 (NK), Asn-145, and 151-154 (GSSL). Catalysis depends on His-158, which acts as the Nucleophile. Substrate is bound by residues Gln-160, 273-275 (NST), Met-280, and Lys-284.

The protein belongs to the ATP adenylyltransferase family. As to quaternary structure, monomer. It depends on a divalent metal cation as a cofactor. Post-translationally, the N-terminus is blocked.

The protein resides in the cytoplasm. The protein localises to the nucleus. It carries out the reaction ADP + ATP + H(+) = P(1),P(4)-bis(5'-adenosyl) tetraphosphate + phosphate. It catalyses the reaction sulfate + ADP + H(+) = adenosine 5'-phosphosulfate + phosphate. Ap4A phosphorylase catalyzes the phosphorolytic degradation of bis(5'-adenosyl) tetraphosphate (Ap4A) into ADP and ATP. Can also use other Np4N' nucleotides (where N and N' stand for A,C,G or U) as substrates with equal efficiency. Cannot catalyze the reverse reaction. Additionally, this enzyme can also catalyze the phosphorolytic degradation of adenosine 5'-phosphosulfate (AMPS) into ADP and sulfate, the reversible exchange reaction between inorganic phosphate and the beta-phosphate of a nucleoside diphosphate (NDP), and the synthesis of Ap4A from AMPS plus ATP. In Saccharomyces cerevisiae (strain ATCC 204508 / S288c) (Baker's yeast), this protein is Protein APA1.